The following is a 309-amino-acid chain: Foldase protein PrsA (309 aa).

An N-terminal signal peptide occupies residues 1 to 22 (MKTRSKLAAGFLTLMSVATLAA). Cys-23 carries the N-palmitoyl cysteine lipid modification. The S-diacylglycerol cysteine moiety is linked to residue Cys-23. Residues 146-241 (TPETSVQVIK…TSYYIIKVTD (96 aa)) enclose the PpiC domain.

It belongs to the PrsA family.

Its subcellular location is the cell membrane. The enzyme catalyses [protein]-peptidylproline (omega=180) = [protein]-peptidylproline (omega=0). Its function is as follows. Plays a major role in protein secretion by helping the post-translocational extracellular folding of several secreted proteins. The sequence is that of Foldase protein PrsA from Streptococcus agalactiae serotype Ia (strain ATCC 27591 / A909 / CDC SS700).